Reading from the N-terminus, the 469-residue chain is Putative multidrug resistance protein MdtD (469 aa).

13 consecutive transmembrane segments (helical) span residues 8–28 (LWIV…VNTA), 45–65 (SVIV…GWLA), 68–88 (VGVK…SLLC), 102–122 (VIQG…VMKI), 134–154 (FVTL…GFLV), 161–181 (WIFL…LWLM), 191–211 (FDIS…LALD), 215–235 (GLGL…LALA), 263–283 (LIGS…TPVF), 286–306 (IGLG…IIGS), 338–358 (LSFP…VLFF), 392–412 (MVMQ…LGVF), and 426–446 (SAFL…ALIF).

This sequence belongs to the major facilitator superfamily. TCR/Tet family.

Its subcellular location is the cell inner membrane. In Yersinia enterocolitica serotype O:8 / biotype 1B (strain NCTC 13174 / 8081), this protein is Putative multidrug resistance protein MdtD.